A 279-amino-acid chain; its full sequence is NAD kinase (279 aa).

Catalysis depends on aspartate 61, which acts as the Proton acceptor. NAD(+) is bound by residues 61-62 (DG), 138-139 (ND), lysine 149, lysine 166, aspartate 168, and 179-184 (TGYSFS).

Belongs to the NAD kinase family. A divalent metal cation is required as a cofactor.

The protein localises to the cytoplasm. The enzyme catalyses NAD(+) + ATP = ADP + NADP(+) + H(+). Functionally, involved in the regulation of the intracellular balance of NAD and NADP, and is a key enzyme in the biosynthesis of NADP. Catalyzes specifically the phosphorylation on 2'-hydroxyl of the adenosine moiety of NAD to yield NADP. The protein is NAD kinase of Borrelia garinii subsp. bavariensis (strain ATCC BAA-2496 / DSM 23469 / PBi) (Borreliella bavariensis).